The chain runs to 255 residues: FMR1 neighbor protein (255 aa).

At 1-68 the chain is on the cytoplasmic side; it reads MSSHRRKAKG…ESLKMRVSKP (68 aa). The helical transmembrane segment at 69-89 threads the bilayer; sequence FGMLMLSIWILLFVCYYLSYY. Over 90-183 the chain is Extracellular; the sequence is LCSGSSYFVL…FAPFRDVPKQ (94 aa). Residues 125–184 enclose the P-type domain; that stretch reads LLNFFFPTTCNLRENQVAKPCNELQDLSESECLRHKCCFSSSGTTSFKCFAPFRDVPKQM. A helical transmembrane segment spans residues 184-204; it reads MMQMFGLGAISLILVCLPIYC. Topologically, residues 205–255 are cytoplasmic; the sequence is RSLFWRSEPADDLQRQDNRVVTGLKKQRRKRKRKSEMLQKAARGREEHGDE. Residues 220-255 form a disordered region; the sequence is QDNRVVTGLKKQRRKRKRKSEMLQKAARGREEHGDE. Residues 229 to 238 are compositionally biased toward basic residues; the sequence is KKQRRKRKRK.

In terms of tissue distribution, testis-specific. Expressed in melanoma, sarcoma, lung, breast, bladder, esophageal and ovarian cancers.

It is found in the membrane. This Homo sapiens (Human) protein is FMR1 neighbor protein.